The primary structure comprises 79 residues: Translational regulator CsrA (79 aa).

The protein belongs to the CsrA/RsmA family. Homodimer; the beta-strands of each monomer intercalate to form a hydrophobic core, while the alpha-helices form wings that extend away from the core.

It is found in the cytoplasm. Functionally, a translational regulator that binds mRNA to regulate translation initiation and/or mRNA stability. Usually binds in the 5'-UTR at or near the Shine-Dalgarno sequence preventing ribosome-binding, thus repressing translation. Its main target seems to be the major flagellin gene, while its function is anatagonized by FliW. This is Translational regulator CsrA from Shouchella clausii (strain KSM-K16) (Alkalihalobacillus clausii).